Consider the following 172-residue polypeptide: Acetolactate synthase small subunit (172 aa).

The ACT domain occupies 4–78 (TLSVLVEDEA…NILKVDNITE (75 aa)).

The protein belongs to the acetolactate synthase small subunit family. Dimer of large and small chains.

It localises to the plastid. The protein localises to the chloroplast. It carries out the reaction 2 pyruvate + H(+) = (2S)-2-acetolactate + CO2. It functions in the pathway amino-acid biosynthesis; L-isoleucine biosynthesis; L-isoleucine from 2-oxobutanoate: step 1/4. It participates in amino-acid biosynthesis; L-valine biosynthesis; L-valine from pyruvate: step 1/4. The protein is Acetolactate synthase small subunit (ilvH) of Cyanidium caldarium (Red alga).